A 1176-amino-acid chain; its full sequence is Carbamoyl phosphate synthase arginine-specific large chain (1176 aa).

Residues 1 to 11 constitute a mitochondrion transit peptide; the sequence is MLRSISIASRA. Residues 70 to 465 are carboxyphosphate synthetic domain; the sequence is SRSPDVKKVL…SLQKAIRQVD (396 aa). 12 residues coordinate ATP: R197, R237, G243, G244, K273, L275, E280, G306, T307, H308, Q348, and E362. In terms of domain architecture, ATP-grasp 1 spans 201–391; sequence VQALNEIDIP…LAYTAAKIAL (191 aa). Residues Q348, E362, and N364 each coordinate Mg(2+). Mn(2+) contacts are provided by Q348, E362, and N364. The segment at 466–610 is oligomerization domain; it reads PNFAGFEAYW…YTSYNATTHD (145 aa). The tract at residues 611–997 is carbamoyl phosphate synthetic domain; it reads VKFDNGTMVL…AYWAALLSVN (387 aa). Positions 734 to 931 constitute an ATP-grasp 2 domain; it reads SSILDSIGVD…FIDTASAAIM (198 aa). Positions 770, 809, 811, 816, 841, 842, 843, 844, 884, and 902 each coordinate ATP. Mg(2+)-binding residues include Q884, E902, and N904. 3 residues coordinate Mn(2+): Q884, E902, and N904. The tract at residues 998–1137 is allosteric domain; the sequence is GMKLPKANSG…NPIPYSEGFK (140 aa). One can recognise an MGS-like domain in the interval 999-1154; the sequence is MKLPKANSGI…RDFVGEAATT (156 aa).

It belongs to the CarB family. As to quaternary structure, heterodimer composed of 2 chains; the small (or glutamine) chain promotes the hydrolysis of glutamine to ammonia, which is used by the large (or ammonia) chain to synthesize carbamoyl phosphate. It depends on Mg(2+) as a cofactor. Mn(2+) serves as cofactor.

The protein localises to the mitochondrion. The enzyme catalyses hydrogencarbonate + L-glutamine + 2 ATP + H2O = carbamoyl phosphate + L-glutamate + 2 ADP + phosphate + 2 H(+). The catalysed reaction is hydrogencarbonate + NH4(+) + 2 ATP = carbamoyl phosphate + 2 ADP + phosphate + 2 H(+). Its pathway is amino-acid biosynthesis; L-arginine biosynthesis; carbamoyl phosphate from bicarbonate: step 1/1. Large subunit of the arginine-specific carbamoyl phosphate synthase (CPSase). CPSase catalyzes the formation of carbamoyl phosphate from the ammonia moiety of glutamine, hydrogencarbonate, and phosphate donated by ATP, constituting the first step of 2 biosynthetic pathways, one leading to arginine and/or urea and the other to pyrimidine nucleotides. The large subunit (synthetase) binds the substrates ammonia (free or transferred from glutamine from the small subunit), hydrogencarbonate and ATP and carries out an ATP-coupled ligase reaction, activating hydrogencarbonate by forming carboxy phosphate which reacts with ammonia to form carbamoyl phosphate. This is Carbamoyl phosphate synthase arginine-specific large chain (argA) from Cutaneotrichosporon cutaneum (Yeast).